The sequence spans 350 residues: NADH-quinone oxidoreductase subunit H (350 aa).

The next 8 helical transmembrane spans lie at 31–51 (LMLL…LFLI), 102–122 (LLAP…IPFG), 132–152 (LGVL…WMAG), 171–191 (MLSY…MAGS), 205–225 (WFIF…NAEF), 263–283 (FMIG…APFG), 286–306 (FIPS…LYMW), and 322–342 (FAWK…GFGL).

This sequence belongs to the complex I subunit 1 family. As to quaternary structure, NDH-1 is composed of 14 different subunits. Subunits NuoA, H, J, K, L, M, N constitute the membrane sector of the complex.

It is found in the cell membrane. The catalysed reaction is a quinone + NADH + 5 H(+)(in) = a quinol + NAD(+) + 4 H(+)(out). Its function is as follows. NDH-1 shuttles electrons from NADH, via FMN and iron-sulfur (Fe-S) centers, to quinones in the respiratory chain. The immediate electron acceptor for the enzyme in this species is believed to be ubiquinone. Couples the redox reaction to proton translocation (for every two electrons transferred, four hydrogen ions are translocated across the cytoplasmic membrane), and thus conserves the redox energy in a proton gradient. This subunit may bind ubiquinone. This Carboxydothermus hydrogenoformans (strain ATCC BAA-161 / DSM 6008 / Z-2901) protein is NADH-quinone oxidoreductase subunit H.